We begin with the raw amino-acid sequence, 65 residues long: Ferredoxin-1 (65 aa).

The region spanning 3–31 (RKFYVDQDECIACESCVEIAPGAFAMDPE) is the 4Fe-4S ferredoxin-type domain. Residues Cys12, Cys15, Cys18, and Cys55 each coordinate [4Fe-4S] cluster.

Homodimer. [4Fe-4S] cluster is required as a cofactor.

Functionally, ferredoxins are iron-sulfur proteins that transfer electrons in a wide variety of metabolic reactions. The polypeptide is Ferredoxin-1 (fd1) (Desulfocurvibacter africanus (Desulfovibrio africanus)).